The following is a 763-amino-acid chain: Exo-1,4-beta-xylosidase bxlB (763 aa).

An N-terminal signal peptide occupies residues 1 to 23 (MAVFKSWNLALLSSLFIPALCQS). Residue Asn-63 is glycosylated (N-linked (GlcNAc...) asparagine). Asp-288 is an active-site residue. N-linked (GlcNAc...) asparagine glycans are attached at residues Asn-340, Asn-408, Asn-419, Asn-458, Asn-621, and Asn-760.

The protein belongs to the glycosyl hydrolase 3 family.

The protein resides in the secreted. The catalysed reaction is Hydrolysis of (1-&gt;4)-beta-D-xylans, to remove successive D-xylose residues from the non-reducing termini.. It participates in glycan degradation; xylan degradation. Its function is as follows. Xylan 1,4-beta-xylosidase involved in the hydrolysis of xylan, a major structural heterogeneous polysaccharide found in plant biomass representing the second most abundant polysaccharide in the biosphere, after cellulose. Active against rye arabinoxylan and xylohexaose, but not paranitrophenyl-beta-xyloside. The chain is Exo-1,4-beta-xylosidase bxlB (bxlB) from Emericella nidulans (strain FGSC A4 / ATCC 38163 / CBS 112.46 / NRRL 194 / M139) (Aspergillus nidulans).